The sequence spans 242 residues: MNKTALITGASGGIGKSISETLAARGYNLLLHYNTNQNAAAELAEKLSQMFGVNAEILQADLSAQDGADKLTSSIVQPIDAIVLNSGRSHFGLITDVDNATVQEMVQLHVASPYMLTRNLLPGMIRNKSGAIVAVSSIWGETGASCEVLYSMAKGAQHSFVKGLAKELAPSGIRVNAVAPGAVDTNMMNQFTPAEKEEIADEIPIGRLARPQEIADATAFLLSEKASYITGQILSVNGGWHC.

Thr8–Gly15 contacts NADP(+). Ser137 contributes to the substrate binding site. Tyr150 serves as the catalytic Proton acceptor.

Belongs to the short-chain dehydrogenases/reductases (SDR) family.

This is an uncharacterized protein from Bacillus subtilis (strain 168).